A 507-amino-acid chain; its full sequence is Probable Xaa-Pro aminopeptidase HCAG_02413 (507 aa).

Residues D283, D294, E431, and E469 each coordinate Mn(2+).

This sequence belongs to the peptidase M24B family. Requires Mn(2+) as cofactor.

The catalysed reaction is Release of any N-terminal amino acid, including proline, that is linked to proline, even from a dipeptide or tripeptide.. Catalyzes the removal of a penultimate prolyl residue from the N-termini of peptides. In Ajellomyces capsulatus (strain NAm1 / WU24) (Darling's disease fungus), this protein is Probable Xaa-Pro aminopeptidase HCAG_02413.